The chain runs to 286 residues: Oxidoreductase clz15 (286 aa).

This sequence belongs to the asaB hydroxylase/desaturase family.

The protein operates within secondary metabolite biosynthesis. Oxidoreductase; part of the gene cluster that mediates the biosynthesis of squalestatin S1 (SQS1, also known as zaragozic acid A), a heavily oxidized fungal polyketide that offers potent cholesterol lowering activity by targeting squalene synthase (SS). SQS1 is composed of a 2,8-dioxobicyclic[3.2.1]octane-3,4,5-tricarboxyclic acid core that is connected to two lipophilic polyketide arms. These initial steps feature the priming of an unusual benzoic acid starter unit onto the highly reducing polyketide synthase clz14, followed by oxaloacetate extension and product release to generate a tricarboxylic acid containing product. The phenylalanine ammonia lyase (PAL) clz10 and the acyl-CoA ligase clz12 are involved in transforming phenylalanine into benzoyl-CoA. The citrate synthase-like protein clz17 is involved in connecting the C-alpha-carbons of the hexaketide chain and oxaloacetate to afford the tricarboxylic acid unit. The potential hydrolytic enzymes, clz11 and clz13, are in close proximity to pks2 and may participate in product release. On the other side, the tetraketide arm is synthesized by a the squalestatin tetraketide synthase clz2 and enzymatically esterified to the core in the last biosynthetic step, by the acetyltransferase clz6. The biosynthesis of the tetraketide must involve 3 rounds of chain extension. After the first and second rounds methyl-transfer occurs, and in all rounds of extension the ketoreductase and dehydratase are active. The enoyl reductase and C-MeT of clz2 are not active in the final round of extension. The acetyltransferase clz6 appears to have a broad substrate selectivity for its acyl CoA substrate, allowing the in vitro synthesis of novel squalestatins. The biosynthesis of SQS1 requires several oxidative steps likely performed by oxidoreductases clz3, clz15 and clz16. Finally, in support of the identification of the cluster as being responsible for SQS1 production, the cluster contains a gene encoding a putative squalene synthase (SS) clz20, suggesting a likely mechanism for self-resistance. The sequence is that of Oxidoreductase clz15 from Cochliobolus lunatus (Filamentous fungus).